Consider the following 196-residue polypeptide: Molybdenum cofactor guanylyltransferase (196 aa).

GTP-binding positions include 14-16 (LAG), K27, D73, and D106. D106 contributes to the Mg(2+) binding site.

The protein belongs to the MobA family. In terms of assembly, monomer. Mg(2+) is required as a cofactor.

The protein localises to the cytoplasm. The catalysed reaction is Mo-molybdopterin + GTP + H(+) = Mo-molybdopterin guanine dinucleotide + diphosphate. Functionally, transfers a GMP moiety from GTP to Mo-molybdopterin (Mo-MPT) cofactor (Moco or molybdenum cofactor) to form Mo-molybdopterin guanine dinucleotide (Mo-MGD) cofactor. The protein is Molybdenum cofactor guanylyltransferase of Acidiphilium cryptum (strain JF-5).